Reading from the N-terminus, the 307-residue chain is Peroxisomal membrane protein PMP34 (307 aa).

Topologically, residues 1-9 (MASVLSYES) are cytoplasmic. Residues 1–147 (MASVLSYESL…NEDIIPTNYK (147 aa)) are necessary for targeting to peroxisomes and interaction with PEX19. Solcar repeat units lie at residues 7–92 (YESL…LKAV), 99–192 (SSTG…LKRQ), and 200–294 (LSSL…LTAA). The chain crosses the membrane as a helical span at residues 10 to 30 (LVHAVAGAVGSVTAMTVFFPL). Residues 31-66 (DTARLRLQVDEKRKSKTTHAVLLEIIKEEGLLAPYR) lie on the Lumenal side of the membrane. Residues 67-87 (GWFPVISSLCCSNFVYFYTFN) form a helical membrane-spanning segment. At 88–104 (SLKAVWVKGQRSSTGKD) the chain is on the cytoplasmic side. Residues 105-125 (LVVGFVAGVVNVLLTTPLWVV) traverse the membrane as a helical segment. The Lumenal segment spans residues 126–160 (NTRLKLQGAKFRNEDIIPTNYKGIIDAFHQIIRDE). A helical transmembrane segment spans residues 161 to 181 (GILALWNGTFPSLLLVFNPAI). The Cytoplasmic portion of the chain corresponds to 182–202 (QFMFYEGLKRQLLKKRMKLSS). A Peroxisome localization signal motif is present at residues 190–199 (KRQLLKKRMK). The chain crosses the membrane as a helical span at residues 203 to 223 (LDVFIIGAIAKAIATTVTYPM). Residues 224-280 (QTVQSILRFGRHRLNPENRTLGSLRNVLSLLHQRVKRFGIMGLYKGLEAKLLQTVLT) lie on the Lumenal side of the membrane. The tract at residues 244-307 (LGSLRNVLSL…VMGLKSTHKH (64 aa)) is necessary for targeting to peroxisomes and interaction with PEX19. The chain crosses the membrane as a helical span at residues 281–301 (AALMFLVYEKLTAATFTVMGL). The Cytoplasmic portion of the chain corresponds to 302–307 (KSTHKH).

This sequence belongs to the mitochondrial carrier (TC 2.A.29) family. Interacts (via N- and C-terminus peroxisomal targeting regions) with PEX19; the interaction occurs with the newly synthesized SLC25A17 in the cytosol. As to expression, expressed in liver, kidney, heart, spleen, muscle and lung.

It localises to the cytoplasm. It is found in the peroxisome membrane. It carries out the reaction AMP(out) + CoA(in) = AMP(in) + CoA(out). It catalyses the reaction 3'-dephospho-CoA(in) + AMP(out) = 3'-dephospho-CoA(out) + AMP(in). The catalysed reaction is acetyl-CoA(in) + AMP(out) = acetyl-CoA(out) + AMP(in). The enzyme catalyses AMP(in) + NAD(+)(out) = AMP(out) + NAD(+)(in). It carries out the reaction FAD(in) + AMP(out) = FAD(out) + AMP(in). It catalyses the reaction FMN(in) + AMP(out) = FMN(out) + AMP(in). The catalysed reaction is AMP(in) + ADP(out) = AMP(out) + ADP(in). The enzyme catalyses adenosine 3',5'-bisphosphate(in) + AMP(out) = adenosine 3',5'-bisphosphate(out) + AMP(in). It carries out the reaction FAD(in) + CoA(out) = FAD(out) + CoA(in). It catalyses the reaction FAD(in) + adenosine 3',5'-bisphosphate(out) = FAD(out) + adenosine 3',5'-bisphosphate(in). The catalysed reaction is FMN(in) + CoA(out) = FMN(out) + CoA(in). The enzyme catalyses FMN(in) + adenosine 3',5'-bisphosphate(out) = FMN(out) + adenosine 3',5'-bisphosphate(in). It carries out the reaction FAD(out) + NAD(+)(in) = FAD(in) + NAD(+)(out). It catalyses the reaction FMN(out) + NAD(+)(in) = FMN(in) + NAD(+)(out). The catalysed reaction is NAD(+)(in) + CoA(out) = NAD(+)(out) + CoA(in). The enzyme catalyses adenosine 3',5'-bisphosphate(out) + NAD(+)(in) = adenosine 3',5'-bisphosphate(in) + NAD(+)(out). It carries out the reaction FMN(out) + ADP(in) = FMN(in) + ADP(out). It catalyses the reaction FAD(out) + ADP(in) = FAD(in) + ADP(out). The catalysed reaction is ADP(out) + CoA(in) = ADP(in) + CoA(out). The enzyme catalyses adenosine 3',5'-bisphosphate(in) + ADP(out) = adenosine 3',5'-bisphosphate(out) + ADP(in). Its function is as follows. Peroxisomal transporter for multiple cofactors like coenzyme A (CoA), flavin adenine dinucleotide (FAD), flavin mononucleotide (FMN) and nucleotide adenosine monophosphate (AMP), and to a lesser extent for nicotinamide adenine dinucleotide (NAD(+)), adenosine diphosphate (ADP) and adenosine 3',5'-diphosphate (PAP). May catalyze the transport of free CoA, FAD and NAD(+) from the cytosol into the peroxisomal matrix by a counter-exchange mechanism. This chain is Peroxisomal membrane protein PMP34 (Slc25a17), found in Mus musculus (Mouse).